The following is a 620-amino-acid chain: Chaperone protein HscA homolog (620 aa).

This sequence belongs to the heat shock protein 70 family.

In terms of biological role, chaperone involved in the maturation of iron-sulfur cluster-containing proteins. Has a low intrinsic ATPase activity which is markedly stimulated by HscB. The protein is Chaperone protein HscA homolog of Bordetella petrii (strain ATCC BAA-461 / DSM 12804 / CCUG 43448).